A 240-amino-acid polypeptide reads, in one-letter code: UDP-2,3-diacylglucosamine hydrolase (240 aa).

Mn(2+) contacts are provided by Asp8, His10, Asp41, Asn79, and His114. Substrate is bound at residue 79 to 80 (NR). The substrate site is built by Asp122, Ser160, Asn164, Lys167, and His195. Residues His195 and His197 each contribute to the Mn(2+) site.

This sequence belongs to the LpxH family. It depends on Mn(2+) as a cofactor.

It localises to the cell inner membrane. It catalyses the reaction UDP-2-N,3-O-bis[(3R)-3-hydroxytetradecanoyl]-alpha-D-glucosamine + H2O = 2-N,3-O-bis[(3R)-3-hydroxytetradecanoyl]-alpha-D-glucosaminyl 1-phosphate + UMP + 2 H(+). The protein operates within glycolipid biosynthesis; lipid IV(A) biosynthesis; lipid IV(A) from (3R)-3-hydroxytetradecanoyl-[acyl-carrier-protein] and UDP-N-acetyl-alpha-D-glucosamine: step 4/6. Hydrolyzes the pyrophosphate bond of UDP-2,3-diacylglucosamine to yield 2,3-diacylglucosamine 1-phosphate (lipid X) and UMP by catalyzing the attack of water at the alpha-P atom. Involved in the biosynthesis of lipid A, a phosphorylated glycolipid that anchors the lipopolysaccharide to the outer membrane of the cell. The chain is UDP-2,3-diacylglucosamine hydrolase from Pectobacterium carotovorum subsp. carotovorum (strain PC1).